Reading from the N-terminus, the 530-residue chain is MSVDTYTETTKIDKLLKKPTSHFQLSTTQLYNKILDNNEGVLTELGAVNASTGKYTGRSPKDKFFVSEPSYRDNIDWGEINQPIDEETFLKLYHKVLDYLDKKDELYVFKGYAGSDKDTMLKLTVINELAWHNLFAKNMFIRPESKEEATKIKPNFTIVSAPHFKADPEVDGTKSETFVIISFKHKVILIGGTEYAGEMKKGIFSVMNYLLPMQDIMSMHCSANVGEKGDVALFFGLSGTGKTTLSADPHRKLIGDDEHGWNKNGVFNIEGGCYAKAINLSKEKEPQIFDAIKYGAILENTVVAEDGSVDFEDNRYTENTRAAYPINHIDNIVVPSKAAHPNTIIFLTADAFGVIPPISKLNKDQAMYHFLSGFTSKLAGTERGVTEPEPSFSTCFGAPFFPLHPTVYADLLGELIDLHDVDVYLVNTGWTGGKYGVGRRISLHYTRQMVNQAISGKLKNAEYTKDSTFGLSIPVEIEDVPKTILNPINAWSDKEKYKAQAEDLIQRFEKNFEKFGEKVEHIAEKGSFNK.

The substrate site is built by arginine 58, tyrosine 195, and lysine 201. Residues lysine 201, histidine 220, and 236-244 each bind ATP; that span reads GLSGTGKTT. Mn(2+) contacts are provided by lysine 201 and histidine 220. Mn(2+) is bound at residue aspartate 257. ATP is bound by residues glutamate 285, arginine 321, 440–441, and threonine 446; that span reads RI. Arginine 321 is a binding site for substrate.

It belongs to the phosphoenolpyruvate carboxykinase (ATP) family. The cofactor is Mn(2+).

The protein localises to the cytoplasm. It catalyses the reaction oxaloacetate + ATP = phosphoenolpyruvate + ADP + CO2. Its pathway is carbohydrate biosynthesis; gluconeogenesis. Its function is as follows. Involved in the gluconeogenesis. Catalyzes the conversion of oxaloacetate (OAA) to phosphoenolpyruvate (PEP) through direct phosphoryl transfer between the nucleoside triphosphate and OAA. The chain is Phosphoenolpyruvate carboxykinase (ATP) from Staphylococcus aureus (strain Mu3 / ATCC 700698).